The sequence spans 424 residues: MKTLLIFTLTLLCSGCLEDTAVTPINTINPDSVEYYGVAAANNAFAFDMYSKLVQLESREKNNILFSPYSVSAAMAICYEGTEGTAKEQISNVFYFPANNTVFKVRLKETNDKVYSGSDGYELENANAIWVQEEYPVKEEYIFNVKNYYRSEVTNLDFVEKPDESRDAINEWVEDKTDRKIKDIVPKGSITDDTRLILTNAIYFNGKWEHEFDKKMTSKKTFYPTKREEVSVDMMYISSNFNYSENLKAKIIELPYKGNDLSMYIVLPKGNNITEFENNFTVNEYTELKYNMESLGDVETSIPKFKFETKTELSDSLIEMGVADAFDLKLANFSGISEIRLLISRMIHQDFIDVQEEVTEAAASTTVFIGSVSSSKSKSREFKADLPFIFFIEDRRTDCILFMGKVEYPEYEGTGRFWSLPWNK.

The protein belongs to the serpin family.

This is an uncharacterized protein from Methanosarcina acetivorans (strain ATCC 35395 / DSM 2834 / JCM 12185 / C2A).